We begin with the raw amino-acid sequence, 333 residues long: NADH-quinone oxidoreductase subunit H (333 aa).

The next 8 membrane-spanning stretches (helical) occupy residues 15 to 35, 88 to 108, 117 to 137, 159 to 179, 191 to 211, 239 to 259, 274 to 296, and 313 to 333; these read FFIF…FVTY, FILA…VIPF, IGVG…GVVT, ISYE…AGSL, VWYI…AVAE, WAFF…LITV, IPGA…WFRV, and VLLP…ELFF.

It belongs to the complex I subunit 1 family. As to quaternary structure, NDH-1 is composed of 14 different subunits. Subunits NuoA, H, J, K, L, M, N constitute the membrane sector of the complex.

It is found in the cell membrane. It carries out the reaction a quinone + NADH + 5 H(+)(in) = a quinol + NAD(+) + 4 H(+)(out). NDH-1 shuttles electrons from NADH, via FMN and iron-sulfur (Fe-S) centers, to quinones in the respiratory chain. The immediate electron acceptor for the enzyme in this species is believed to be ubiquinone. Couples the redox reaction to proton translocation (for every two electrons transferred, four hydrogen ions are translocated across the cytoplasmic membrane), and thus conserves the redox energy in a proton gradient. This subunit may bind ubiquinone. This is NADH-quinone oxidoreductase subunit H from Bacillus anthracis (strain A0248).